Here is an 827-residue protein sequence, read N- to C-terminus: MALEIDYVLSHISQEDKIALLAGIDFWHTHPIPELNVPSIRSTDGPNGIRGTKFFAGVPAACLPCGTALASTWDQNLLREVGVLIGKECLAKGAHCWLGPTINMPRSPLGGRGFESFAEDPHLAGAMAASMITGCESTGVISAVKHFVGNDQEHERRAVDVLVTQRALREIYLRPFQIVARDAGPGALMTSYNKINGKHVVESKEMLDMVRQEWKWNPLIMSDWLGTYTTIDSMNAGLDLEMPGPSRYRGRYVESALQARLIKESTIDSRARKVLEFVQQASRAPVSAVETGRDYPEDRALNRNLCANSIVLLKNQNDILPLPKTIKKIALVGSHVRTPAISGGGSASLEPYYTVSLYDAVSEALPHTEILYEVGAYAHKMLPVIDRLLTNAVMHFYNEPVGTERILRATQPMSKTAFQLMDFNAPELNRGLFYATLTGDFTPDVSGVWDFGLTVFGTGLLYVDDELVVDNTTHQTRGTAFFGKGTVQELGSKTLNAGQTYKIRIEYGSANTSPMKAIGVVHFGGGAAHLGACLHVDSAEMVRSAVKAAAEADYTILCTGLNHEWESEGFDRSHMDLPPGIDALITSVLDVAANKTVIVNQSGTPVTMPWADRARGIVQAWYGGNETGHGIADVIFGDVNPSGKLPLSWPVDVKHNPAYLNYASVGGRVLYGEDVYVGYRYYEKVGREVLFPFGHGLSYTTFTVSPDVVFSQEVFRPEEPPTAAVKIKNTGKVAGAQVLQLYISAPHSPTPRPTKELHGFTKVLLQPGEERVAHIRMDKYATNFWDEIEGMWKSEEGIYEALIGTSSQNILAKGTFRVDRTRYWLGL.

Aspartate 223 is an active-site residue. A PA14 domain is found at 387-546 (RLLTNAVMHF…DSAEMVRSAV (160 aa)). N-linked (GlcNAc...) asparagine glycans are attached at residues asparagine 471, asparagine 594, asparagine 600, and asparagine 625.

Belongs to the glycosyl hydrolase 3 family.

It is found in the secreted. The enzyme catalyses Hydrolysis of terminal, non-reducing beta-D-glucosyl residues with release of beta-D-glucose.. Its pathway is glycan metabolism; cellulose degradation. Functionally, beta-glucosidases are one of a number of cellulolytic enzymes involved in the degradation of cellulosic biomass. Catalyzes the last step releasing glucose from the inhibitory cellobiose. The polypeptide is Probable beta-glucosidase H (bglH) (Aspergillus oryzae (strain ATCC 42149 / RIB 40) (Yellow koji mold)).